The chain runs to 307 residues: Nucleotide-binding protein ACP_0619 (307 aa).

The segment covering 1–14 (MPAPEPTRRAKKDA) has biased composition (basic and acidic residues). The disordered stretch occupies residues 1-23 (MPAPEPTRRAKKDASASPSPAHP). 33-40 (GLSGAGKG) contacts ATP. 83–86 (DVRE) serves as a coordination point for GTP.

The protein belongs to the RapZ-like family.

Functionally, displays ATPase and GTPase activities. This is Nucleotide-binding protein ACP_0619 from Acidobacterium capsulatum (strain ATCC 51196 / DSM 11244 / BCRC 80197 / JCM 7670 / NBRC 15755 / NCIMB 13165 / 161).